Here is a 463-residue protein sequence, read N- to C-terminus: Secretogranin-3 (463 aa).

An N-terminal signal peptide occupies residues 1 to 20; that stretch reads MGPKYVFITAIIGVFWHVQG. 3 disordered regions span residues 87–111, 225–267, and 353–398; these read VKRSGSVRSSVGGHRGTLDDADSTK, DDDK…PEED, and EDKN…KGKA. Composition is skewed to basic and acidic residues over residues 102–111 and 229–262; these read GTLDDADSTK and QEGKMETRNKNEDRESSETKNEDSFSSKERRNEL.

In terms of assembly, interacts with CHGA. Interacts with secretogranin II/SCG2. Interacts (via C-terminus) with CPE.

It localises to the cytoplasmic vesicle. It is found in the secretory vesicle. The protein resides in the secretory vesicle membrane. Its subcellular location is the secreted. In terms of biological role, member of the granin protein family that regulates the biogenesis of secretory granules. Acts as a sorting receptor for intragranular proteins including chromogranin A/CHGA. May also play a role in angiogenesis. Promotes endothelial proliferation, migration and tube formation through MEK/ERK signaling pathway. This chain is Secretogranin-3 (scg3), found in Xenopus tropicalis (Western clawed frog).